The chain runs to 252 residues: Type III pantothenate kinase (252 aa).

6–13 contributes to the ATP binding site; that stretch reads DIGNTNIV. 107–110 contacts substrate; sequence GADL. The active-site Proton acceptor is Asp109. Asp129 serves as a coordination point for K(+). Thr132 is a binding site for ATP. Thr184 contacts substrate.

This sequence belongs to the type III pantothenate kinase family. Homodimer. Requires NH4(+) as cofactor. K(+) serves as cofactor.

The protein resides in the cytoplasm. It catalyses the reaction (R)-pantothenate + ATP = (R)-4'-phosphopantothenate + ADP + H(+). The protein operates within cofactor biosynthesis; coenzyme A biosynthesis; CoA from (R)-pantothenate: step 1/5. Its function is as follows. Catalyzes the phosphorylation of pantothenate (Pan), the first step in CoA biosynthesis. The protein is Type III pantothenate kinase of Bifidobacterium animalis subsp. lactis (strain AD011).